The following is a 622-amino-acid chain: Condensin-2 complex subunit H2 (622 aa).

Threonine 19 carries the post-translational modification Phosphothreonine. Phosphoserine is present on residues serine 95, serine 199, serine 223, and serine 227. The interval tryptophan 207–alanine 354 is disordered. A compositionally biased stretch (low complexity) spans alanine 262 to valine 273. Serine 282 carries the phosphoserine modification. The span at threonine 294–proline 312 shows a compositional bias: basic and acidic residues.

The protein belongs to the CND2 H2 (condensin-2 subunit 2) family. As to quaternary structure, component of the condensin-2 complex, which contains the SMC2 and SMC4 heterodimer, and three non SMC subunits, NCAPG2, NCAPH2 and NCAPD3 that probably regulate the complex.

Its subcellular location is the nucleus. Its function is as follows. Regulatory subunit of the condensin-2 complex, a complex that seems to provide chromosomes with an additional level of organization and rigidity and in establishing mitotic chromosome architecture. May promote the resolution of double-strand DNA catenanes (intertwines) between sister chromatids. Condensin-mediated compaction likely increases tension in catenated sister chromatids, providing directionality for type II topoisomerase-mediated strand exchanges toward chromatid decatenation. Required for decatenation of chromatin bridges at anaphase. Early in neurogenesis, may play an essential role to ensure accurate mitotic chromosome condensation in neuron stem cells, ultimately affecting neuron pool and cortex size. Seems to have lineage-specific role in T-cell development. This is Condensin-2 complex subunit H2 (NCAPH2) from Bos taurus (Bovine).